The following is a 450-amino-acid chain: Interferon-related developmental regulator 1 (450 aa).

Residues 1 to 10 (MPKNKKRNTP) are compositionally biased toward basic residues. The interval 1–46 (MPKNKKRNTPHRGGSGGGGSGAAATTAATAGGQHRNVQPFSDEDAS) is disordered. The segment covering 22–32 (AAATTAATAGG) has biased composition (low complexity).

The protein belongs to the IFRD family. In terms of assembly, interacts with PSIP1/LEDGF.

Its function is as follows. Could play a role in regulating gene activity in the proliferative and/or differentiative pathways induced by NGF. May be an autocrine factor that attenuates or amplifies the initial ligand-induced signal. This Sus scrofa (Pig) protein is Interferon-related developmental regulator 1 (IFRD1).